A 348-amino-acid polypeptide reads, in one-letter code: MAADGDWQDFYEFQEPAGSVQEQENCNASPEAGAGAHAGGDSFPALASSLEEKLSLCFRPTSEAEPPRAAVRPITECSLLQGDEIWNALTDNYGNVMPVDWKSSHTRTLHLLTLNLSEKGMNDGLLFDASDEEELREQLDMHSIIVSCVNEEPLFTADQVIEEIEEMMQESPDPEDDETPTQSDRLSMLSQEIQTLKRSSMSSYEERVKRLSVSELNELLEEIEAAIKQYSEELVQQLALRDELEFEKEVENSFISALIEVQNKQKEHKETAKKKKKLKSGSSQNGRSERSHMPGTYLTTVIPYEKKSGPPSVEDLQILTKILHAMKEDSEKVPSLLTDYILKVLCPT.

The disordered stretch occupies residues 11-40; the sequence is YEFQEPAGSVQEQENCNASPEAGAGAHAGG. Phosphoserine occurs at positions 130, 171, and 190. Residues 206-280 adopt a coiled-coil conformation; it reads ERVKRLSVSE…TAKKKKKLKS (75 aa). The disordered stretch occupies residues 265–296; the sequence is QKEHKETAKKKKKLKSGSSQNGRSERSHMPGT.

The protein belongs to the zygin family. In terms of assembly, homodimer; disulfide-linked. May form heterodimers with FEZ1. Interacts with synaptotagmin.

Functionally, involved in axonal outgrowth and fasciculation. The protein is Fasciculation and elongation protein zeta-2 (Fez2) of Mus musculus (Mouse).